The following is a 939-amino-acid chain: Isoleucine--tRNA ligase (939 aa).

A 'HIGH' region motif is present at residues 57 to 67 (PYANGEIHIGH). Glu563 serves as a coordination point for L-isoleucyl-5'-AMP. Residues 604 to 608 (KMSKS) carry the 'KMSKS' region motif. Lys607 is a binding site for ATP. Residues Cys902, Cys905, Cys922, and Cys925 each contribute to the Zn(2+) site.

It belongs to the class-I aminoacyl-tRNA synthetase family. IleS type 1 subfamily. Monomer. It depends on Zn(2+) as a cofactor.

The protein localises to the cytoplasm. It catalyses the reaction tRNA(Ile) + L-isoleucine + ATP = L-isoleucyl-tRNA(Ile) + AMP + diphosphate. Catalyzes the attachment of isoleucine to tRNA(Ile). As IleRS can inadvertently accommodate and process structurally similar amino acids such as valine, to avoid such errors it has two additional distinct tRNA(Ile)-dependent editing activities. One activity is designated as 'pretransfer' editing and involves the hydrolysis of activated Val-AMP. The other activity is designated 'posttransfer' editing and involves deacylation of mischarged Val-tRNA(Ile). This chain is Isoleucine--tRNA ligase, found in Methylococcus capsulatus (strain ATCC 33009 / NCIMB 11132 / Bath).